The sequence spans 174 residues: Chorismate pyruvate-lyase (174 aa).

The substrate site is built by Met-36, Arg-78, Leu-116, and Glu-157.

Belongs to the UbiC family. Monomer.

Its subcellular location is the cytoplasm. The enzyme catalyses chorismate = 4-hydroxybenzoate + pyruvate. Its pathway is cofactor biosynthesis; ubiquinone biosynthesis. Functionally, removes the pyruvyl group from chorismate, with concomitant aromatization of the ring, to provide 4-hydroxybenzoate (4HB) for the ubiquinone pathway. This chain is Chorismate pyruvate-lyase, found in Serratia proteamaculans (strain 568).